The chain runs to 109 residues: MVQLSKTGVRDTLKAGHPPAVKAGGKRVVKKSADENANVEKETRKTDKPRSVLAPSRMQHLSLLLSGPLEKLGHDFPETPVSVRHSRVRPSVEKPHISRIPCIQQPRKF.

Disordered stretches follow at residues 1 to 51 (MVQL…KPRS) and 76 to 100 (FPET…ISRI). Over residues 31–50 (KSADENANVEKETRKTDKPR) the composition is skewed to basic and acidic residues.

It belongs to the DAP-DAPL1 family. As to quaternary structure, associates with ribosomes; preventing translation. Interacts with eiF5a (eif5a and eif5a2); preventing translation.

Ribosome-binding protein that promotes ribosome hibernation, a process during which ribosomes are stabilized in an inactive state and preserved from proteasomal degradation. Acts via its association with eiF5a (eif5a and eif5a2) at the polypeptide exit tunnel of the ribosome, preventing mRNA translation. Plays a key role in ribosome hibernation in the mature egg by preventing mRNA translation, leading to ribosome inactivation. Ribosomes, which are produced in large quantities during oogenesis, are stored and translationally repressed in the egg and early embryo. The chain is Death-associated protein-like 1 homolog from Danio rerio (Zebrafish).